Reading from the N-terminus, the 358-residue chain is Protein FAM50 homolog (358 aa).

The span at 104 to 113 shows a compositional bias: basic and acidic residues; it reads AKLAEKDRQK. The disordered stretch occupies residues 104–151; the sequence is AKLAEKDRQKRQIQALSFDPDDEPDGDDANDGDEGSGKESEKEDVKEE. Residues 122 to 137 show a composition bias toward acidic residues; the sequence is DPDDEPDGDDANDGDE. A compositionally biased stretch (basic and acidic residues) spans 138 to 151; it reads GSGKESEKEDVKEE.

This sequence belongs to the FAM50 family.

The protein is Protein FAM50 homolog of Anopheles gambiae (African malaria mosquito).